Here is a 167-residue protein sequence, read N- to C-terminus: SsrA-binding protein (167 aa).

The protein belongs to the SmpB family.

The protein resides in the cytoplasm. In terms of biological role, required for rescue of stalled ribosomes mediated by trans-translation. Binds to transfer-messenger RNA (tmRNA), required for stable association of tmRNA with ribosomes. tmRNA and SmpB together mimic tRNA shape, replacing the anticodon stem-loop with SmpB. tmRNA is encoded by the ssrA gene; the 2 termini fold to resemble tRNA(Ala) and it encodes a 'tag peptide', a short internal open reading frame. During trans-translation Ala-aminoacylated tmRNA acts like a tRNA, entering the A-site of stalled ribosomes, displacing the stalled mRNA. The ribosome then switches to translate the ORF on the tmRNA; the nascent peptide is terminated with the 'tag peptide' encoded by the tmRNA and targeted for degradation. The ribosome is freed to recommence translation, which seems to be the essential function of trans-translation. This is SsrA-binding protein from Stenotrophomonas maltophilia (strain R551-3).